A 599-amino-acid polypeptide reads, in one-letter code: Zinc finger BED domain-containing protein 3 (599 aa).

Positions 70–104 (LNGGMGSPGNGPGTPLSRNNYAHHHQQHQNQQHVG) are disordered. Over residues 72–81 (GGMGSPGNGP) the composition is skewed to gly residues. The segment at 123–176 (VKTAKVWRYFDELPTIEQAAECRICRKKIKATNSSTTGMIRHLRSCHVQEYQLV) adopts a BED-type zinc-finger fold. Zn(2+) contacts are provided by Cys144, Cys147, His164, and His169. 2 disordered regions span residues 208–283 (GIEN…QCQN) and 440–491 (ATSS…SSID). Low complexity-rich tracts occupy residues 223-246 (SQKS…SHFS) and 268-283 (SNSI…QCQN). Over residues 440 to 455 (ATSSYEDVSVNESQMA) the composition is skewed to polar residues. Residues 460-483 (GDEEEEIMEEEVEEDENVEIEDDT) are compositionally biased toward acidic residues.

In terms of tissue distribution, expressed in neuronal cell bodies in the ventral cord and HSN neurons.

The protein localises to the nucleus. Its function is as follows. Probable transcription factor. Involved in vulval organogenesis. During vulval development, may play a role in the regulation of cell cycle regulators such as cul-1. Positively modulates expression of homeobox protein lin-39, perhaps by binding to regulatory regions of the lin-39 gene, acting in the vulval lineage. Plays a role in larval molting. The protein is Zinc finger BED domain-containing protein 3 of Caenorhabditis elegans.